The sequence spans 477 residues: Ankyrin repeat, SAM and basic leucine zipper domain-containing protein 1 (477 aa).

Positions Met-1–Gly-24 are disordered. 3 positions are modified to phosphoserine: Ser-17, Ser-18, and Ser-20. ANK repeat units follow at residues Glu-46–Ala-76, Tyr-80–Phe-109, Asp-112–Val-146, Arg-150–Thr-179, Asn-183–Leu-212, and Asp-216–Gly-245. Residues Ser-274 to Glu-336 form the SAM domain.

Interacts with DDX4, PIWIL1, RANBP9 and TDRD1.

The protein localises to the cytoplasm. In terms of biological role, plays a central role during spermatogenesis by repressing transposable elements and preventing their mobilization, which is essential for the germline integrity. Acts via the piRNA metabolic process, which mediates the repression of transposable elements during meiosis by forming complexes composed of piRNAs and Piwi proteins and governs the methylation and subsequent repression of transposons. Its association with pi-bodies suggests a participation in the primary piRNAs metabolic process. Required prior to the pachytene stage to facilitate the production of multiple types of piRNAs, including those associated with repeats involved in the regulation of retrotransposons. May act by mediating protein-protein interactions during germ cell maturation. The polypeptide is Ankyrin repeat, SAM and basic leucine zipper domain-containing protein 1 (ASZ1) (Saimiri boliviensis boliviensis (Bolivian squirrel monkey)).